The sequence spans 139 residues: Glutamate mutase sigma subunit (139 aa).

The B12-binding domain occupies 4 to 139; sequence KIKLVLGVIG…DLHADFPDHA (136 aa). Residues 14 to 18, His17, 62 to 64, and 94 to 98 each bind adenosylcob(III)alamin; these read SDCHA, SSL, and NIVVG.

The protein belongs to the methylaspartate mutase GlmS subunit family. Heterotetramer composed of 2 epsilon subunits (GlmE) and 2 sigma subunits (GlmS). GlmE exists as a homodimer and GlmS as a monomer. Adenosylcob(III)alamin is required as a cofactor.

The catalysed reaction is (2S,3S)-3-methyl-L-aspartate = L-glutamate. It functions in the pathway amino-acid degradation; L-glutamate degradation via mesaconate pathway; acetate and pyruvate from L-glutamate: step 1/4. Catalyzes the carbon skeleton rearrangement of L-glutamate to L-threo-3-methylaspartate ((2S,3S)-3-methylaspartate). This is Glutamate mutase sigma subunit from Treponema denticola (strain ATCC 35405 / DSM 14222 / CIP 103919 / JCM 8153 / KCTC 15104).